The chain runs to 105 residues: Large ribosomal subunit protein uL18c (105 aa).

This sequence belongs to the universal ribosomal protein uL18 family. Part of the 50S ribosomal subunit; contacts the 5S rRNA.

It is found in the plastid. The protein localises to the chloroplast. Its function is as follows. Binds 5S rRNA, forms part of the central protuberance of the 50S subunit. The chain is Large ribosomal subunit protein uL18c (rpl18) from Cyanidium caldarium (Red alga).